A 275-amino-acid polypeptide reads, in one-letter code: Large ribosomal subunit protein uL2c (275 aa).

Positions 219-255 (TVRGSVMNPCDHPHGGGEGRAPIGRTRPLTPWGKPAL) are disordered.

It belongs to the universal ribosomal protein uL2 family. Part of the 50S ribosomal subunit.

The protein resides in the plastid. It localises to the chloroplast. This is Large ribosomal subunit protein uL2c (rpl2) from Trieres chinensis (Marine centric diatom).